A 181-amino-acid chain; its full sequence is ATP synthase subunit b 2 (181 aa).

Over residues 1–12 (MAEGHGTTAHTG) the composition is skewed to low complexity. A disordered region spans residues 1–20 (MAEGHGTTAHTGAEGGHKAP). Residues 33–53 (LVSLLIAFVALYLIVSKVALP) form a helical membrane-spanning segment.

It belongs to the ATPase B chain family. In terms of assembly, F-type ATPases have 2 components, F(1) - the catalytic core - and F(0) - the membrane proton channel. F(1) has five subunits: alpha(3), beta(3), gamma(1), delta(1), epsilon(1). F(0) has three main subunits: a(1), b(2) and c(10-14). The alpha and beta chains form an alternating ring which encloses part of the gamma chain. F(1) is attached to F(0) by a central stalk formed by the gamma and epsilon chains, while a peripheral stalk is formed by the delta and b chains.

It localises to the cell inner membrane. Functionally, f(1)F(0) ATP synthase produces ATP from ADP in the presence of a proton or sodium gradient. F-type ATPases consist of two structural domains, F(1) containing the extramembraneous catalytic core and F(0) containing the membrane proton channel, linked together by a central stalk and a peripheral stalk. During catalysis, ATP synthesis in the catalytic domain of F(1) is coupled via a rotary mechanism of the central stalk subunits to proton translocation. Its function is as follows. Component of the F(0) channel, it forms part of the peripheral stalk, linking F(1) to F(0). The b'-subunit is a diverged and duplicated form of b found in plants and photosynthetic bacteria. This Rhodopseudomonas palustris (strain BisA53) protein is ATP synthase subunit b 2 (atpF2).